Reading from the N-terminus, the 400-residue chain is Large envelope protein (400 aa).

Met-1 is modified (N-acetylmethionine). Disordered stretches follow at residues 1 to 53 (MGGW…DHWP), 88 to 118 (VPVAPPPASTNRQSGRQPTPISPPLRDSHPQ), and 145 to 169 (GSSSGTVNPVPTTASPISSISSRTG). The N-myristoyl glycine; by host moiety is linked to residue Gly-2. The pre-S1 stretch occupies residues 2–119 (GGWSSKPRQG…PPLRDSHPQA (118 aa)). Residues 2–174 (GGWSSKPRQG…SSRTGDPAPN (173 aa)) are pre-S. The Virion surface; in external conformation portion of the chain corresponds to 2–181 (GGWSSKPRQG…APNMENTTSG (180 aa)). Over 2–253 (GGWSSKPRQG…PGYRWMCLRR (252 aa)) the chain is Intravirion; in internal conformation. A glycan (N-linked (GlcNAc...) asparagine) is linked at Trp-4. The segment covering 96–106 (STNRQSGRQPT) has biased composition (polar residues). A pre-S2 region spans residues 120 to 174 (MQWNSTTFHQALLDPRVRGLYFPAGGSSSGTVNPVPTTASPISSISSRTGDPAPN). The segment covering 155–166 (PTTASPISSISS) has biased composition (low complexity). Residues 182-202 (FLGPLLVLQAGFFLLTRILTI) form a helical membrane-spanning segment. Topologically, residues 203–253 (PQSLDSWWTSLNFLGGAPTCPGQNSQSPTSNHSPTSCPPICPGYRWMCLRR) are intravirion; in external conformation. A helical transmembrane segment spans residues 254–274 (FIIFLFILLLCLIFLLVLLDY). The Virion surface segment spans residues 275-348 (QGMLPVCPLL…GASVRFSWLS (74 aa)). Asn-320 is a glycosylation site (N-linked (GlcNAc...) asparagine; by host). A helical membrane pass occupies residues 349-369 (LLVPFVQWFVGLSPTVWLSVI). At 370–375 (WMMWYW) the chain is on the intravirion side. A helical transmembrane segment spans residues 376-398 (GPSLYNILSPFLPLLPIFFCLWV). Residues 399–400 (YI) are Virion surface-facing.

This sequence belongs to the orthohepadnavirus major surface antigen family. In its internal form (Li-HBsAg), interacts with the capsid protein and with the isoform S. Interacts with host chaperone CANX. In terms of assembly, associates with host chaperone CANX through its pre-S2 N glycan; this association may be essential for isoform M proper secretion. As to quaternary structure, interacts with isoform L. Interacts with the antigens of satellite virus HDV (HDVAgs); this interaction is required for encapsidation of HDV genomic RNA. Isoform M is N-terminally acetylated by host at a ratio of 90%, and N-glycosylated by host at the pre-S2 region. Post-translationally, myristoylated.

The protein localises to the virion membrane. Functionally, the large envelope protein exists in two topological conformations, one which is termed 'external' or Le-HBsAg and the other 'internal' or Li-HBsAg. In its external conformation the protein attaches the virus to cell receptors and thereby initiating infection. This interaction determines the species specificity and liver tropism. This attachment induces virion internalization predominantly through caveolin-mediated endocytosis. The large envelope protein also assures fusion between virion membrane and endosomal membrane. In its internal conformation the protein plays a role in virion morphogenesis and mediates the contact with the nucleocapsid like a matrix protein. The middle envelope protein plays an important role in the budding of the virion. It is involved in the induction of budding in a nucleocapsid independent way. In this process the majority of envelope proteins bud to form subviral lipoprotein particles of 22 nm of diameter that do not contain a nucleocapsid. The polypeptide is Large envelope protein (Hepatitis B virus genotype C subtype adr (strain Japan/adr4/1983) (HBV-C)).